The following is a 602-amino-acid chain: DNA mismatch repair protein MutL (602 aa).

It belongs to the DNA mismatch repair MutL/HexB family.

In terms of biological role, this protein is involved in the repair of mismatches in DNA. It is required for dam-dependent methyl-directed DNA mismatch repair. May act as a 'molecular matchmaker', a protein that promotes the formation of a stable complex between two or more DNA-binding proteins in an ATP-dependent manner without itself being part of a final effector complex. In Baumannia cicadellinicola subsp. Homalodisca coagulata, this protein is DNA mismatch repair protein MutL.